Here is a 201-residue protein sequence, read N- to C-terminus: Small ribosomal subunit protein uS4c (201 aa).

The interval 15 to 44 is disordered; it reads LGALPGLTNKRPRAGSDLRNQSRSGKKSQY. The 62-residue stretch at 89–150 folds into the S4 RNA-binding domain; that stretch reads MRLDNILFRL…EQKSKVLIQN (62 aa).

Belongs to the universal ribosomal protein uS4 family. In terms of assembly, part of the 30S ribosomal subunit. Contacts protein S5. The interaction surface between S4 and S5 is involved in control of translational fidelity.

It is found in the plastid. The protein resides in the chloroplast. One of the primary rRNA binding proteins, it binds directly to 16S rRNA where it nucleates assembly of the body of the 30S subunit. Functionally, with S5 and S12 plays an important role in translational accuracy. In Lactuca sativa (Garden lettuce), this protein is Small ribosomal subunit protein uS4c (rps4).